A 198-amino-acid chain; its full sequence is Pyridoxal 5'-phosphate synthase subunit PdxT (198 aa).

An L-glutamine-binding site is contributed by 49-51; sequence GES. Cysteine 81 serves as the catalytic Nucleophile. Residues arginine 112 and 140 to 141 each bind L-glutamine; that span reads IR. Catalysis depends on charge relay system residues histidine 176 and glutamate 178.

Belongs to the glutaminase PdxT/SNO family. In the presence of PdxS, forms a dodecamer of heterodimers. Only shows activity in the heterodimer.

It catalyses the reaction aldehydo-D-ribose 5-phosphate + D-glyceraldehyde 3-phosphate + L-glutamine = pyridoxal 5'-phosphate + L-glutamate + phosphate + 3 H2O + H(+). The catalysed reaction is L-glutamine + H2O = L-glutamate + NH4(+). It functions in the pathway cofactor biosynthesis; pyridoxal 5'-phosphate biosynthesis. Its function is as follows. Catalyzes the hydrolysis of glutamine to glutamate and ammonia as part of the biosynthesis of pyridoxal 5'-phosphate. The resulting ammonia molecule is channeled to the active site of PdxS. The polypeptide is Pyridoxal 5'-phosphate synthase subunit PdxT (Methanocella arvoryzae (strain DSM 22066 / NBRC 105507 / MRE50)).